The primary structure comprises 304 residues: D-alanine--D-alanine ligase (304 aa).

An ATP-grasp domain is found at 101–298 (KKIFIKNKIL…FIKLIEWILK (198 aa)). 131–184 (EKNLKFPVVVKPINEGSSVHVYICDKTNILKNLKVLKSYNEILIEEFIPGREIQ) contacts ATP. Mg(2+) is bound by residues D253, E265, and N267.

The protein belongs to the D-alanine--D-alanine ligase family. It depends on Mg(2+) as a cofactor. Requires Mn(2+) as cofactor.

The protein localises to the cytoplasm. It catalyses the reaction 2 D-alanine + ATP = D-alanyl-D-alanine + ADP + phosphate + H(+). It functions in the pathway cell wall biogenesis; peptidoglycan biosynthesis. Its function is as follows. Cell wall formation. In Pelagibacter ubique (strain HTCC1062), this protein is D-alanine--D-alanine ligase.